Consider the following 158-residue polypeptide: Transcriptional repressor NrdR (158 aa).

A zinc finger lies at 3 to 34 (CPSCQNTDSRVLESRAADAGRSVRRRRECLHC). Residues 49-139 (ITVLKRNGNR…VYRDFRGVND (91 aa)) form the ATP-cone domain.

The protein belongs to the NrdR family. The cofactor is Zn(2+).

Negatively regulates transcription of bacterial ribonucleotide reductase nrd genes and operons by binding to NrdR-boxes. The protein is Transcriptional repressor NrdR of Prochlorococcus marinus (strain MIT 9313).